Reading from the N-terminus, the 231-residue chain is Endonuclease NucS (231 aa).

It belongs to the NucS endonuclease family.

It localises to the cytoplasm. In terms of biological role, cleaves both 3' and 5' ssDNA extremities of branched DNA structures. The protein is Endonuclease NucS of Pseudarthrobacter chlorophenolicus (strain ATCC 700700 / DSM 12829 / CIP 107037 / JCM 12360 / KCTC 9906 / NCIMB 13794 / A6) (Arthrobacter chlorophenolicus).